Consider the following 214-residue polypeptide: Adenylate kinase (214 aa).

10 to 15 (GSGKGT) serves as a coordination point for ATP. Positions 30–59 (STGDMLRAAVREGTPLGMEAKKIMDAGQLV) are NMP. Residues threonine 31, arginine 36, 57-59 (QLV), 85-88 (GFPR), and glutamine 92 contribute to the AMP site. An LID region spans residues 122–159 (GRRVHPASGRTYHVVFNPPKVEGRDDETGEPLVQREDD). Residues arginine 123 and 132–133 (TY) contribute to the ATP site. Residues arginine 156 and arginine 167 each contribute to the AMP site. Residue glycine 200 participates in ATP binding.

This sequence belongs to the adenylate kinase family. As to quaternary structure, monomer.

It is found in the cytoplasm. The catalysed reaction is AMP + ATP = 2 ADP. The protein operates within purine metabolism; AMP biosynthesis via salvage pathway; AMP from ADP: step 1/1. Its function is as follows. Catalyzes the reversible transfer of the terminal phosphate group between ATP and AMP. Plays an important role in cellular energy homeostasis and in adenine nucleotide metabolism. This chain is Adenylate kinase, found in Methylococcus capsulatus (strain ATCC 33009 / NCIMB 11132 / Bath).